We begin with the raw amino-acid sequence, 132 residues long: Large ribosomal subunit protein bL12 (132 aa).

Residues 102 to 126 are compositionally biased toward basic and acidic residues; the sequence is APKPIKEATNKDDAESIKKQLEEAG. The segment at 102-132 is disordered; sequence APKPIKEATNKDDAESIKKQLEEAGAKASVK.

The protein belongs to the bacterial ribosomal protein bL12 family. As to quaternary structure, homodimer. Part of the ribosomal stalk of the 50S ribosomal subunit. Forms a multimeric L10(L12)X complex, where L10 forms an elongated spine to which 2 to 4 L12 dimers bind in a sequential fashion. Binds GTP-bound translation factors.

Its function is as follows. Forms part of the ribosomal stalk which helps the ribosome interact with GTP-bound translation factors. Is thus essential for accurate translation. The polypeptide is Large ribosomal subunit protein bL12 (Rippkaea orientalis (strain PCC 8801 / RF-1) (Cyanothece sp. (strain PCC 8801))).